The chain runs to 465 residues: CUGBP Elav-like family member 3 (465 aa).

2 RRM domains span residues 7 to 88 (IKLF…PADS) and 95 to 175 (RKLF…FADT). Pro residues predominate over residues 346 to 359 (PPALVAQQPPPPPQ). The tract at residues 346–379 (PPALVAQQPPPPPQQQQQQQQQQQQQQQREGPDG) is disordered. The span at 360–373 (QQQQQQQQQQQQQQ) shows a compositional bias: low complexity. The RRM 3 domain occupies 380–458 (CNIFIYHLPQ…KRLKVQLKRP (79 aa)).

Belongs to the CELF/BRUNOL family. Expressed in brain.

The protein resides in the nucleus. It is found in the cytoplasm. Functionally, RNA-binding protein involved in the regulation of pre-mRNA alternative splicing. Mediates exon inclusion and/or exclusion in pre-mRNA that are subject to tissue-specific and developmentally regulated alternative splicing. Specifically activates exon 5 inclusion of cardiac isoforms of TNNT2 during heart remodeling at the juvenile to adult transition. Activates the splicing of MAPT/Tau exon 10. Binds to muscle-specific splicing enhancer (MSE) intronic sites flanking the alternative exon 5 of TNNT2 pre-mRNA. In Homo sapiens (Human), this protein is CUGBP Elav-like family member 3 (CELF3).